A 96-amino-acid polypeptide reads, in one-letter code: Cathelin (96 aa).

Gln-1 bears the Pyrrolidone carboxylic acid mark. A disordered region spans residues 31-50 (DQPPKADEDPGTPKPVSFTV). Cystine bridges form between Cys-55-Cys-66 and Cys-73-Cys-90.

Belongs to the cathelicidin family.

The protein localises to the secreted. Probably a microbicidal peptide. In Sus scrofa (Pig), this protein is Cathelin.